Consider the following 122-residue polypeptide: EPIDERMAL PATTERNING FACTOR-like protein 1 (122 aa).

An N-terminal signal peptide occupies residues 1 to 26 (MFAIYKSTLLLLPLILILLITPQVSS). Intrachain disulfides connect Cys55-Cys113, Cys59-Cys65, and Cys62-Cys115.

The protein belongs to the plant cysteine rich small secretory peptide family. Epidermal patterning factor subfamily.

It localises to the secreted. Functionally, controls stomatal patterning. The chain is EPIDERMAL PATTERNING FACTOR-like protein 1 from Arabidopsis thaliana (Mouse-ear cress).